Consider the following 103-residue polypeptide: Cell division protein FtsB (103 aa).

Residues 1-3 (MGK) are Cytoplasmic-facing. Residues 4-21 (LTLLLLALLVWLQYSLWF) form a helical membrane-spanning segment. The Periplasmic portion of the chain corresponds to 22-103 (GKNGIHDYSR…RAQTAGQNNR (82 aa)). Residues 33–62 (NDDVVAQQATNAKLKARNDQLFAEIDDLNG) adopt a coiled-coil conformation.

The protein belongs to the FtsB family. Part of a complex composed of FtsB, FtsL and FtsQ.

It localises to the cell inner membrane. Its function is as follows. Essential cell division protein. May link together the upstream cell division proteins, which are predominantly cytoplasmic, with the downstream cell division proteins, which are predominantly periplasmic. The protein is Cell division protein FtsB of Salmonella arizonae (strain ATCC BAA-731 / CDC346-86 / RSK2980).